The sequence spans 245 residues: Aquaporin SIP1-1 (245 aa).

The next 2 helical transmembrane spans lie at 14-34 (AVVTFLWVLCASALGASTAAV) and 55-75 (LLSVLLFTFDLLCGALGGASF). Residues 76-78 (NPT) carry the NPA 1 motif. 3 consecutive transmembrane segments (helical) span residues 100-120 (FPAQAAGAVGGALAISELMPA), 138-158 (GALAEGVLTFVITLTVLWVIV), and 164-184 (VILKTLLLSTSIVSVILAGAE). An NPA 2 motif is present at residues 191 to 193 (NPA). Residues 213–233 (VYWICPFIGAMLAGWIFRVVF) traverse the membrane as a helical segment.

Belongs to the MIP/aquaporin (TC 1.A.8) family. SIP (TC 1.A.8.10) subfamily.

The protein localises to the membrane. Its function is as follows. Aquaporins facilitate the transport of water and small neutral solutes across cell membranes. This is Aquaporin SIP1-1 (SIP1-1) from Zea mays (Maize).